We begin with the raw amino-acid sequence, 100 residues long: MKDKNFTGMPKELQPWEGFGREAQAVKIVVDKRRYGKFVTIIEGIDPKIEDIEKIAKELKKKVASGGTVKEGRIIELQGDHRQEVKKFLEDMGFKVSVEQ.

The protein belongs to the SUI1 family.

The chain is Protein translation factor SUI1 homolog from Thermoplasma volcanium (strain ATCC 51530 / DSM 4299 / JCM 9571 / NBRC 15438 / GSS1).